The chain runs to 606 residues: Leucine-rich repeat and immunoglobulin-like domain-containing nogo receptor-interacting protein 1 (606 aa).

The signal sequence occupies residues 1–27 (MILQLPSCLCPILLIVVGSILSGSASG). Disulfide bonds link cysteine 28–cysteine 34 and cysteine 32–cysteine 43. The LRRNT domain maps to 28-57 (CPQRCDCSPQDRSVLCHRKRYLDVPEGIPT). Residues 28–547 (CPQRCDCSPQ…FDIKTLIIAT (520 aa)) lie on the Extracellular side of the membrane. 11 LRR repeats span residues 58–79 (DTRL…EFSA), 82–103 (YLEE…AFNG), 106–127 (NLRS…VFTG), 130–151 (NLTQ…MFQD), 154–175 (NLKS…AFRG), 178–199 (SLEE…ALSH), 202–223 (GLIT…SFKR), 250–271 (NLTS…AIRH), 274–295 (YLRF…MLYE), 298–319 (RLQE…AFRG), and 322–343 (HLKV…SFHS). N-linked (GlcNAc...) asparagine glycosylation occurs at asparagine 130. Asparagine 188 carries N-linked (GlcNAc...) asparagine glycosylation. Asparagine 250, asparagine 260, and asparagine 279 each carry an N-linked (GlcNAc...) asparagine glycan. 7 N-linked (GlcNAc...) asparagine glycosylation sites follow: asparagine 327, asparagine 374, asparagine 478, asparagine 491, asparagine 512, asparagine 523, and asparagine 528. One can recognise an LRRCT domain in the interval 355–409 (NPLACDCRLLWIFRRRWRLNFSRQQPSCSSPEYVQGKEFKDFPDVLQPNYFTCRR). 3 cysteine pairs are disulfide-bonded: cysteine 359–cysteine 382, cysteine 361–cysteine 407, and cysteine 432–cysteine 483. The Ig-like C2-type domain occupies 397-496 (PDVLQPNYFT…NAGGNDTSLA (100 aa)). Residues 548–568 (TMGFISFLGVVLFCLVLLFLW) traverse the membrane as a helical segment. Topologically, residues 569–606 (SRGKGNTKHNIEIEYVPRKSDAGLSSADAPRKFNMKMI) are cytoplasmic.

Its subcellular location is the cell membrane. In terms of biological role, may play a role in regulating axonal regeneration and plasticity in the adult central nervous system. The polypeptide is Leucine-rich repeat and immunoglobulin-like domain-containing nogo receptor-interacting protein 1 (lingo1) (Xenopus tropicalis (Western clawed frog)).